The primary structure comprises 159 residues: S-ribosylhomocysteine lyase (159 aa).

Positions 53, 57, and 124 each coordinate Fe cation.

The protein belongs to the LuxS family. As to quaternary structure, homodimer. The cofactor is Fe cation.

It carries out the reaction S-(5-deoxy-D-ribos-5-yl)-L-homocysteine = (S)-4,5-dihydroxypentane-2,3-dione + L-homocysteine. Functionally, involved in the synthesis of autoinducer 2 (AI-2) which is secreted by bacteria and is used to communicate both the cell density and the metabolic potential of the environment. The regulation of gene expression in response to changes in cell density is called quorum sensing. Catalyzes the transformation of S-ribosylhomocysteine (RHC) to homocysteine (HC) and 4,5-dihydroxy-2,3-pentadione (DPD). The polypeptide is S-ribosylhomocysteine lyase (Clostridium beijerinckii (strain ATCC 51743 / NCIMB 8052) (Clostridium acetobutylicum)).